The following is a 481-amino-acid chain: Glutamate mutase epsilon subunit (481 aa).

Position 67 (Arg67) interacts with L-glutamate. Gly69 provides a ligand contact to adenosylcob(III)alamin. L-glutamate is bound at residue Arg99. Asn122 serves as a coordination point for adenosylcob(III)alamin. Residues 148–149 (RH), Glu170, and Tyr176 contribute to the L-glutamate site. Pro179 is a binding site for adenosylcob(III)alamin. An L-glutamate-binding site is contributed by Tyr180. Phe296, Lys325, Glu329, and Ile333 together coordinate adenosylcob(III)alamin.

This sequence belongs to the methylaspartate mutase GlmE subunit family. As to quaternary structure, heterotetramer composed of 2 epsilon subunits (GlmE) and 2 sigma subunits (GlmS). GlmE exists as a homodimer and GlmS as a monomer. The cofactor is adenosylcob(III)alamin.

It catalyses the reaction (2S,3S)-3-methyl-L-aspartate = L-glutamate. It participates in amino-acid degradation; L-glutamate degradation via mesaconate pathway; acetate and pyruvate from L-glutamate: step 1/4. Catalyzes the carbon skeleton rearrangement of L-glutamate to L-threo-3-methylaspartate ((2S,3S)-3-methylaspartate). In Yersinia enterocolitica serotype O:8 / biotype 1B (strain NCTC 13174 / 8081), this protein is Glutamate mutase epsilon subunit.